The following is a 111-amino-acid chain: Integration host factor subunit alpha (111 aa).

Belongs to the bacterial histone-like protein family. Heterodimer of an alpha and a beta chain.

This protein is one of the two subunits of integration host factor, a specific DNA-binding protein that functions in genetic recombination as well as in transcriptional and translational control. The sequence is that of Integration host factor subunit alpha from Polaromonas sp. (strain JS666 / ATCC BAA-500).